The sequence spans 300 residues: UDP-N-acetylenolpyruvoylglucosamine reductase (300 aa).

Residues 28 to 193 enclose the FAD-binding PCMH-type domain; the sequence is KTGGPADWLA…LDATFALKLG (166 aa). R172 is a catalytic residue. The Proton donor role is filled by S222. The active site involves E292.

It belongs to the MurB family. FAD is required as a cofactor.

It is found in the cytoplasm. The enzyme catalyses UDP-N-acetyl-alpha-D-muramate + NADP(+) = UDP-N-acetyl-3-O-(1-carboxyvinyl)-alpha-D-glucosamine + NADPH + H(+). Its pathway is cell wall biogenesis; peptidoglycan biosynthesis. Functionally, cell wall formation. This is UDP-N-acetylenolpyruvoylglucosamine reductase from Limosilactobacillus fermentum (strain NBRC 3956 / LMG 18251) (Lactobacillus fermentum).